A 1729-amino-acid polypeptide reads, in one-letter code: 1,3-beta-glucan synthase component bgs1 (1729 aa).

Serine 23 is subject to Phosphoserine. The next 6 membrane-spanning stretches (helical) occupy residues 378 to 398 (WTAC…AVVF), 416 to 436 (SMLL…FIFA), 448 to 468 (LVVG…YSIT), 503 to 523 (FVSW…SYFF), 546 to 566 (YILG…LLYL), and 577 to 597 (YLWY…CLGI). Phosphoserine occurs at positions 784 and 788. Transmembrane regions (helical) follow at residues 1180–1200 (MVIM…GAMY), 1237–1257 (ILSI…CELG), 1337–1357 (MLLF…WITL), 1440–1460 (YGEI…FLFI), 1484–1504 (VAPL…GIML), 1515–1535 (YGVY…VVVF), 1550–1572 (LLGF…ICFL), and 1678–1698 (ATLY…PFVF).

Belongs to the glycosyltransferase 48 family. As to quaternary structure, component of the 1,3-beta-glucan synthase (GS) complex, composed of at least the alternate catalytic subunits bgs1, bgs2, bgs3, and bgs4, and a regulatory subunit chr4.

It localises to the cell membrane. The protein resides in the cell septum. It catalyses the reaction [(1-&gt;3)-beta-D-glucosyl](n) + UDP-alpha-D-glucose = [(1-&gt;3)-beta-D-glucosyl](n+1) + UDP + H(+). In terms of biological role, alternate catalytic subunit of the 1,3-beta-glucan synthase (GS) complex. Synthesizes 1,3-beta-glucan, a major structural component of the fungal cell wall. Required for the assembly of the division septum and maintenance of cell polarity. This chain is 1,3-beta-glucan synthase component bgs1 (bgs1), found in Schizosaccharomyces pombe (strain 972 / ATCC 24843) (Fission yeast).